Here is a 124-residue protein sequence, read N- to C-terminus: uncharacterized protein (124 aa).

It localises to the cytoplasm. The protein resides in the nucleus. This is an uncharacterized protein from Schizosaccharomyces pombe (strain 972 / ATCC 24843) (Fission yeast).